We begin with the raw amino-acid sequence, 2871 residues long: Fibrillin-1 (2871 aa).

The first 24 residues, 1–24, serve as a signal peptide directing secretion; that stretch reads MRRGRLLEVALGFTVLLASYTSHR. Positions 25–44 are excised as a propeptide; the sequence is AEANLEAGNGKETRASRAKR. Over residues 29 to 39 the composition is skewed to basic and acidic residues; it reads LEAGNGKETRA. The interval 29–49 is disordered; it reads LEAGNGKETRASRAKRRGGGG. The tract at residues 45 to 81 is fibrillin unique N-terminal (FUN) domain; it reads RGGGGHDALKGPNVCGSRYNAYCCPGWKTLPGGNQCI. The interval 45 to 450 is N-terminal domain; that stretch reads RGGGGHDALK…PPRVLPVNVT (406 aa). 11 cysteine pairs are disulfide-bonded: cysteine 59/cysteine 68, cysteine 67/cysteine 80, cysteine 85/cysteine 94, cysteine 89/cysteine 100, cysteine 102/cysteine 111, cysteine 119/cysteine 129, cysteine 123/cysteine 134, cysteine 136/cysteine 145, cysteine 150/cysteine 160, cysteine 154/cysteine 166, and cysteine 168/cysteine 177. EGF-like domains follow at residues 81–112, 115–146, and 147–178; these read IVPI…PSCG, SIQH…THCG, and QPVC…PQCE. Positions 119-329 are interaction with MFAP4; the sequence is CNIRCMNGGS…YTSPDGTRCI (211 aa). Residues 184-236 form the TB 1 domain; the sequence is GPCFTVVSNQMCQGQLSGIVCTKTLCCATVGRAWGHPCEMCPAQPHPCRRGFI. The hybrid domain 1 stretch occupies residues 195-221; that stretch reads CQGQLSGIVCTKTLCCATVGRAWGHPC. The EGF-like 4; calcium-binding domain maps to 246-287; it reads DVDECQAIPGLCQGGNCINTVGSFECKCPAGHKFNEVSQKCE. Cystine bridges form between cysteine 250/cysteine 262, cysteine 257/cysteine 271, cysteine 273/cysteine 286, cysteine 292/cysteine 304, cysteine 299/cysteine 313, and cysteine 315/cysteine 328. O-linked (Glc) serine glycosylation is present at serine 268. In terms of domain architecture, EGF-like 5; calcium-binding spans 288-329; that stretch reads DIDECSTIPGICDGGECTNTVSSYFCKCPPGFYTSPDGTRCI. In terms of domain architecture, TB 2 spans 334–389; the sequence is GYCYTALTNGRCSNQLPQSITKMQCCCDVGRCWSPGVTVTPEMCPIRATEDFNKLC. Asparagine 448 carries an N-linked (GlcNAc...) asparagine glycan. One can recognise an EGF-like 6 domain in the interval 449 to 489; sequence VTDYCQLFRYLCHNGRCIPTPGSYRCECNKGFQLDLRGECI. Cystine bridges form between cysteine 453/cysteine 465, cysteine 460/cysteine 474, cysteine 476/cysteine 488, cysteine 494/cysteine 504, cysteine 499/cysteine 513, cysteine 515/cysteine 528, cysteine 534/cysteine 546, cysteine 541/cysteine 555, cysteine 557/cysteine 570, cysteine 576/cysteine 587, cysteine 582/cysteine 596, cysteine 598/cysteine 611, cysteine 617/cysteine 628, cysteine 623/cysteine 637, and cysteine 639/cysteine 652. An O-linked (Glc) serine glycan is attached at serine 471. One can recognise an EGF-like 7; calcium-binding domain in the interval 490 to 529; that stretch reads DVDECEKNPCAGGECINNQGSYTCQCRPGYQSTLTRTECR. O-linked (Glc) serine glycosylation occurs at serine 510. The 42-residue stretch at 530 to 571 folds into the EGF-like 8; calcium-binding domain; that stretch reads DIDECLQNGRICNNGRCINTDGSFHCVCNAGFHVTRDGKNCE. The 41-residue stretch at 572–612 folds into the EGF-like 9; calcium-binding domain; that stretch reads DMDECSIRNMCLNGMCINEDGSFKCICKPGFQLASDGRYCK. The region spanning 613 to 653 is the EGF-like 10; calcium-binding domain; it reads DINECETSGICMNGRCVNTDGSYRCECFPGLAVGLDGRVCV. The TB 3 domain occupies 659-711; sequence STCYGGYKRGQCVKPLFGAVTKSECCCASTEYAFGEPCQPCPSQNSAEYQALC. The region spanning 723 to 764 is the EGF-like 11; calcium-binding domain; that stretch reads DINECALDPDICPNGICENLRGTYKCICNSGYEVDSTGKNCV. Intrachain disulfides connect cysteine 727–cysteine 739, cysteine 734–cysteine 748, cysteine 750–cysteine 763, cysteine 769–cysteine 781, cysteine 776–cysteine 790, cysteine 792–cysteine 805, cysteine 811–cysteine 821, cysteine 816–cysteine 830, cysteine 832–cysteine 845, cysteine 853–cysteine 875, cysteine 862–cysteine 887, cysteine 876–cysteine 890, cysteine 896–cysteine 908, cysteine 914–cysteine 926, cysteine 921–cysteine 935, and cysteine 937–cysteine 950. The 42-residue stretch at 765 to 806 folds into the EGF-like 12; calcium-binding domain; the sequence is DINECVLNSLLCDNGQCRNTPGSFVCTCPKGFIYKPDLKTCE. An EGF-like 13; calcium-binding domain is found at 807–846; sequence DIDECESSPCINGVCKNSPGSFICECSSESTLDPTKTICI. One can recognise a TB 4 domain in the interval 851 to 902; the sequence is GTCWQTIIDGRCEININGATLKSQCCSSLGAAWGSPCTPCQVDPICGKGYSR. The interval 862-887 is hybrid domain 2; that stretch reads CEININGATLKSQCCSSLGAAWGSPC. The EGF-like 14; calcium-binding domain maps to 910–951; the sequence is DIDECEVFPGVCKNGLCVNSKGSFKCQCPNGMTLDATGRICL. Residues 956 to 1008 enclose the TB 5 domain; it reads ETCFLRYEDEECTLPVVGRHRMDACCCSVGAAWGTEECEECPPRNTPEYEELC. In terms of domain architecture, EGF-like 15; calcium-binding spans 1028 to 1069; that stretch reads DINECKMIPNLCTHGKCRNTIGSFKCRCDSGFALDSEERNCI. 43 disulfide bridges follow: cysteine 1032-cysteine 1044, cysteine 1039-cysteine 1053, cysteine 1055-cysteine 1068, cysteine 1074-cysteine 1086, cysteine 1081-cysteine 1095, cysteine 1097-cysteine 1111, cysteine 1117-cysteine 1129, cysteine 1124-cysteine 1138, cysteine 1140-cysteine 1153, cysteine 1159-cysteine 1171, cysteine 1201-cysteine 1212, cysteine 1208-cysteine 1221, cysteine 1223-cysteine 1236, cysteine 1242-cysteine 1254, cysteine 1249-cysteine 1263, cysteine 1265-cysteine 1278, cysteine 1284-cysteine 1296, cysteine 1291-cysteine 1305, cysteine 1307-cysteine 1320, cysteine 1326-cysteine 1339, cysteine 1333-cysteine 1348, cysteine 1350-cysteine 1361, cysteine 1367-cysteine 1380, cysteine 1374-cysteine 1389, cysteine 1391-cysteine 1402, cysteine 1408-cysteine 1420, cysteine 1415-cysteine 1429, cysteine 1450-cysteine 1461, cysteine 1456-cysteine 1470, cysteine 1472-cysteine 1485, cysteine 1491-cysteine 1502, cysteine 1497-cysteine 1511, cysteine 1513-cysteine 1526, cysteine 1534-cysteine 1562, cysteine 1549-cysteine 1574, cysteine 1563-cysteine 1577, cysteine 1564-cysteine 1589, cysteine 1610-cysteine 1622, cysteine 1617-cysteine 1631, cysteine 1633-cysteine 1646, cysteine 1652-cysteine 1663, cysteine 1658-cysteine 1672, and cysteine 1674-cysteine 1687. One can recognise an EGF-like 16; calcium-binding domain in the interval 1070-1112; sequence DIDECRISPDLCGRGQCVNTPGDFECKCDEGYESGFMMMKNCM. Residues 1113–1154 enclose the EGF-like 17; calcium-binding domain; that stretch reads DIDECQRDPLLCRGGVCLNTEGSYRCECPSGHQMSPNISACI. Residue serine 1135 is glycosylated (O-linked (Glc) serine). Asparagine 1149 carries an N-linked (GlcNAc...) asparagine glycan. The region spanning 1155 to 1196 is the EGF-like 18; calcium-binding domain; the sequence is DINECELSAHLCPHGRCVNLIGKYQRARNPGYHSTPDRLFCV. An EGF-like 19; calcium-binding domain is found at 1197–1237; that stretch reads DIDECSIMNGGCETFCTNSEGSYECSCQPGFALMPDQRSCT. O-linked (Glc) serine glycosylation is present at serine 1218. The 42-residue stretch at 1238–1279 folds into the EGF-like 20; calcium-binding domain; it reads DIDECEDNPNICDGGQCTNIPGEYRCLCYDGFMASEDMKTCV. The 42-residue stretch at 1280–1321 folds into the EGF-like 21; calcium-binding domain; the sequence is DVNECDLNPNICLSGTCENTKGSFICHCDMGYSGKKGKTGCT. A glycan (O-linked (Glc) serine) is linked at serine 1302. The EGF-like 22; calcium-binding domain occupies 1322–1362; sequence DINECEIGAHNCDRHAVCTNTAGSFNCSCSPGWIGDGIKCT. A glycan (O-linked (Glc) serine) is linked at serine 1345. An N-linked (GlcNAc...) asparagine glycan is attached at asparagine 1347. The 41-residue stretch at 1363-1403 folds into the EGF-like 23; calcium-binding domain; that stretch reads DLDECSNGTHMCSQHADCKNTMGSYRCLCKEGYTGDGFTCA. Asparagine 1369 carries N-linked (GlcNAc...) asparagine glycosylation. A glycan (O-linked (Glc) serine) is linked at serine 1386. The region spanning 1404–1445 is the EGF-like 24; calcium-binding domain; sequence DLDECSENVKLCGNVQCLYAPGGYHCEYDMGFVPSADRKSCV. The EGF-like 25; calcium-binding domain occupies 1446–1486; that stretch reads DSDECSLPNICVFGTCHNLPGLFRCECEIGYELDRSGGNCT. N-linked (GlcNAc...) asparagine glycosylation occurs at asparagine 1484. Residues 1487–1527 form the EGF-like 26; calcium-binding domain; that stretch reads DVNECLEPPTCISGNCVNTPGSYTCVCPPDFELNPTRVGCV. Residue serine 1508 is glycosylated (O-linked (Glc) serine). The C-terminal domain stretch occupies residues 1528–2731; the sequence is DTRSGNCYLD…GYPKRGRKRR (1204 aa). One can recognise a TB 6 domain in the interval 1532–1589; sequence GNCYLDVRPRGDNGDTACSNEIGVGVSKASCCCSLGKAWGTPCEQCPPVNTSEYKILC. The short motif at 1541 to 1543 is the Cell attachment site element; sequence RGD. A glycan (N-linked (GlcNAc...) asparagine) is linked at asparagine 1581. Positions 1606-1647 constitute an EGF-like 27; calcium-binding domain; it reads DIDECQELPGLCQGGKCINTFGSFQCRCPTGYYLNEDTRVCD. Serine 1628 carries an O-linked (Glc) serine glycan. The EGF-like 28; calcium-binding domain maps to 1648-1688; it reads DVNECETPGICGPGTCYNTVGNYTCICPPDYMQVNGGNNCM. An N-linked (GlcNAc...) asparagine glycan is attached at asparagine 1669. The 56-residue stretch at 1693–1748 folds into the TB 7 domain; that stretch reads SLCYRNYYADNQTCDGELLFNMTKKMCCCSYNIGRAWNKPCEQCPIPSTDEFATLC. Residues asparagine 1703 and asparagine 1713 are each glycosylated (N-linked (GlcNAc...) asparagine). Positions 1766–1807 constitute an EGF-like 29; calcium-binding domain; it reads DIDECREIPGVCENGVCINMVGSFRCECPVGFFYNDKLLVCE. Cystine bridges form between cysteine 1770-cysteine 1782, cysteine 1777-cysteine 1791, cysteine 1793-cysteine 1806, cysteine 1812-cysteine 1824, cysteine 1818-cysteine 1833, cysteine 1835-cysteine 1847, cysteine 1853-cysteine 1865, cysteine 1860-cysteine 1874, cysteine 1876-cysteine 1889, cysteine 1895-cysteine 1905, cysteine 1900-cysteine 1914, cysteine 1916-cysteine 1928, cysteine 1934-cysteine 1947, cysteine 1942-cysteine 1956, cysteine 1958-cysteine 1971, cysteine 1977-cysteine 1989, cysteine 1984-cysteine 1998, cysteine 2000-cysteine 2011, cysteine 2017-cysteine 2029, cysteine 2024-cysteine 2038, cysteine 2040-cysteine 2053, cysteine 2061-cysteine 2083, cysteine 2070-cysteine 2096, cysteine 2084-cysteine 2099, cysteine 2085-cysteine 2111, cysteine 2131-cysteine 2142, cysteine 2137-cysteine 2151, cysteine 2153-cysteine 2164, cysteine 2170-cysteine 2181, cysteine 2176-cysteine 2190, cysteine 2192-cysteine 2204, cysteine 2210-cysteine 2221, cysteine 2217-cysteine 2230, cysteine 2232-cysteine 2245, cysteine 2251-cysteine 2265, cysteine 2258-cysteine 2274, cysteine 2276-cysteine 2289, cysteine 2295-cysteine 2307, cysteine 2302-cysteine 2316, and cysteine 2318-cysteine 2331. Residues 1808–1848 form the EGF-like 30; calcium-binding domain; that stretch reads DIDECQNGPVCQRNAECINTAGSYRCDCKPGYRFTSTGQCN. An O-linked (Glc) serine glycan is attached at serine 1830. Residues 1849 to 1890 form the EGF-like 31; calcium-binding domain; that stretch reads DRNECQEIPNICSHGQCIDTVGSFYCLCHTGFKTNADQTMCL. An O-linked (Glc) serine glycan is attached at serine 1871. One can recognise an EGF-like 32; calcium-binding domain in the interval 1891-1929; it reads DINECERDACGNGTCRNTIGSFNCRCNHGFILSHNNDCI. A glycan (N-linked (GlcNAc...) asparagine) is linked at asparagine 1902. O-linked (Glc) serine glycosylation occurs at serine 1911. Positions 1930–1972 constitute an EGF-like 33; calcium-binding domain; it reads DVDECATGNGNLCRNGQCINTVGSFQCQCNEGYEVAPDGRTCV. O-linked (Glc) serine glycosylation occurs at serine 1953. Residues 1973 to 2012 enclose the EGF-like 34; calcium-binding domain; sequence DINECLLEPGKCAPGTCQNLDGSYRCICPPGYSLQNDKCE. The EGF-like 35; calcium-binding domain occupies 2013-2054; sequence DIDECVEEPEICALGTCSNTEGSFKCLCPDGFSLSSTGRRCQ. O-linked (Glc) serine glycosylation is present at serine 2035. The TB 8 domain occupies 2059 to 2111; that stretch reads SYCYAKFEGGKCSSPKSRNHSKQECCCALKGEGWGDPCELCPTEPDEAFRQIC. Residue asparagine 2077 is glycosylated (N-linked (GlcNAc...) asparagine). An EGF-like 36; calcium-binding domain is found at 2127–2165; sequence DMDECKEPDVCKHGQCINTDGSYRCECPFGYILEGNECV. Residue serine 2148 is glycosylated (O-linked (Glc) serine). In terms of domain architecture, EGF-like 37; calcium-binding spans 2166–2205; it reads DTDECSVGNPCGNGTCKNVIGGFECTCEEGFEPGPMMTCE. Asparagine 2178 carries an N-linked (GlcNAc...) asparagine glycan. An EGF-like 38; calcium-binding domain is found at 2206–2246; that stretch reads DINECAQNPLLCAFRCVNTYGSYECKCPTGYVLREDRRMCK. Serine 2227 is a glycosylation site (O-linked (Glc) serine). In terms of domain architecture, EGF-like 39; calcium-binding spans 2247 to 2290; the sequence is DEDECEEGKHDCAEKQMECKNLIGMYICICGPGYQRRPDGEGCV. Residues 2291–2332 form the EGF-like 40; calcium-binding domain; that stretch reads DENECQTKPGICENGRCLNTRGSYTCECNDGFTASPTQDECL. Serine 2313 carries an O-linked (Glc) serine glycan. The 54-residue stretch at 2337-2390 folds into the TB 9 domain; that stretch reads GYCFTEVLQNMCQIGSSNRNPVTKSECCCDGGRGWGPHCEICPFQGTVAFKKLC. The 42-residue stretch at 2402–2443 folds into the EGF-like 41; calcium-binding domain; the sequence is DIDECKVIHDVCRNGECINDRGSYHCICKTGYTPDITGTACV. 21 disulfides stabilise this stretch: cysteine 2406–cysteine 2418, cysteine 2413–cysteine 2427, cysteine 2429–cysteine 2442, cysteine 2448–cysteine 2459, cysteine 2455–cysteine 2468, cysteine 2470–cysteine 2483, cysteine 2489–cysteine 2500, cysteine 2496–cysteine 2509, cysteine 2511–cysteine 2522, cysteine 2528–cysteine 2541, cysteine 2535–cysteine 2550, cysteine 2552–cysteine 2565, cysteine 2571–cysteine 2581, cysteine 2577–cysteine 2590, cysteine 2592–cysteine 2605, cysteine 2611–cysteine 2622, cysteine 2617–cysteine 2631, cysteine 2633–cysteine 2646, cysteine 2652–cysteine 2663, cysteine 2659–cysteine 2672, and cysteine 2674–cysteine 2686. Residues 2444-2484 form the EGF-like 42; calcium-binding domain; it reads DLNECNQAPKPCNFICKNTEGSYQCSCPKGYILQEDGRSCK. An O-linked (Glc) serine glycan is attached at serine 2465. One can recognise an EGF-like 43; calcium-binding domain in the interval 2485–2523; the sequence is DLDECATKQHNCQFLCVNTIGSFACKCPPGFTQHHTACI. The 43-residue stretch at 2524–2566 folds into the EGF-like 44; calcium-binding domain; the sequence is DNNECTSDINLCGAKGICQNTPGSFTCECQRGFSLDQSGASCE. The O-linked (Glc) serine glycan is linked to serine 2547. Positions 2567 to 2606 constitute an EGF-like 45; calcium-binding domain; that stretch reads DVDECEGNHRCQHGCQNIIGGYRCSCPQGYLQHYQWNQCV. The EGF-like 46; calcium-binding domain occupies 2607-2647; sequence DENECLSAHICGGASCHNTLGSYKCMCPAGFQYEQFSGGCQ. An O-linked (Glc) serine glycan is attached at serine 2628. Residues 2648-2687 enclose the EGF-like 47; calcium-binding domain; sequence DINECGSSQAPCSYGCSNTEGGYLCGCPPGYFRIGQGHCV. 2 positions are modified to phosphoserine: serine 2702 and serine 2709. 3 N-linked (GlcNAc...) asparagine glycosylation sites follow: asparagine 2734, asparagine 2750, and asparagine 2767.

This sequence belongs to the fibrillin family. In terms of assembly, interacts with COL16A1. Interacts with integrin alpha-V/beta-3. Interacts with ADAMTS10; this interaction promotes microfibril assembly. Interacts with THSD4; this interaction promotes fibril formation. Interacts (via N-terminal domain) with FBLN2 and FBLN5. Interacts with ELN. Forms a ternary complex with ELN and FBLN2 or FBLN5 and a significant interaction with ELN seen only in the presence of FBLN2 or FBLN5. Interacts (via N-terminal domain) with LTBP2 (via C-terminal domain) in a Ca(+2)-dependent manner. Interacts (via N-terminal domain) with LTBP1 (via C-terminal domain). Interacts with integrins ITGA5:ITGB1, ITGAV:ITGB3 and ITGAV:ITGB6. Interacts (via N-terminal domain) with BMP2, BMP4, BMP7, BMP10 and GDF5. Interacts (via N-terminal domain) with MFAP2 and MFAP5. Interacts with ADAMTSL5. Interacts with MFAP4. Interacts (via N-terminal domain) with TNFSF11 in a Ca(+2)-dependent manner. Interacts (via N-terminal domain) with EFEMP2; this interaction inhibits EFEMP2 binding to LOX and ELN. Post-translationally, cleavage of N- and C-terminus by furin is required for incorporation into the extracellular matrix and assembly into microfibrils. The C-terminus, which corresponds to the Asprosin chain, was initially thought to constitute a propeptide. Fibrillin-1 and Asprosin chains are still linked together during the secretion from cells, but are subsequently separated by furin, an essential step for incorporation of Fibrillin-1 into the nascent microfibrils. Forms intermolecular disulfide bonds either with other fibrillin-1 molecules or with other components of the microfibrils. In terms of processing, O-glycosylated on serine residues by POGLUT2 and POGLUT3 which is necessary for efficient protein secretion.

It is found in the secreted. It localises to the extracellular space. Its subcellular location is the extracellular matrix. Structural component of the 10-12 nm diameter microfibrils of the extracellular matrix, which conveys both structural and regulatory properties to load-bearing connective tissues. Fibrillin-1-containing microfibrils provide long-term force bearing structural support. In tissues such as the lung, blood vessels and skin, microfibrils form the periphery of the elastic fiber, acting as a scaffold for the deposition of elastin. In addition, microfibrils can occur as elastin-independent networks in tissues such as the ciliary zonule, tendon, cornea and glomerulus where they provide tensile strength and have anchoring roles. Fibrillin-1 also plays a key role in tissue homeostasis through specific interactions with growth factors, such as the bone morphogenetic proteins (BMPs), growth and differentiation factors (GDFs) and latent transforming growth factor-beta-binding proteins (LTBPs), cell-surface integrins and other extracellular matrix protein and proteoglycan components. Regulates osteoblast maturation by controlling TGF-beta bioavailability and calibrating TGF-beta and BMP levels, respectively. Negatively regulates osteoclastogenesis by binding and sequestering an osteoclast differentiation and activation factor TNFSF11. This leads to disruption of TNFSF11-induced Ca(2+) signaling and impairment of TNFSF11-mediated nuclear translocation and activation of transcription factor NFATC1 which regulates genes important for osteoclast differentiation and function. Mediates cell adhesion via its binding to cell surface receptors integrins ITGAV:ITGB3 and ITGA5:ITGB1. Binds heparin and this interaction plays an important role in the assembly of microfibrils. In terms of biological role, hormone that targets the liver to increase plasma glucose levels. Secreted by white adipose tissue and circulates in the plasma. Acts in response to fasting and promotes blood glucose elevation by binding to the surface of hepatocytes. Promotes hepatocyte glucose release by activating the protein kinase A activity in the liver, resulting in rapid glucose release into the circulation. This is Fibrillin-1 from Sus scrofa (Pig).